A 392-amino-acid polypeptide reads, in one-letter code: Isocitrate dehydrogenase [NAD] subunit gamma, mitochondrial (392 aa).

The N-terminal 39 residues, 1 to 39 (MALKVATAAGGAVKAALRPALLWRPWEVLGSHEAPRRSF), are a transit peptide targeting the mitochondrion. Residues threonine 119 and asparagine 132 each coordinate citrate. 3 residues coordinate substrate: arginine 135, arginine 166, and aspartate 253. Aspartate 253 contacts Mn(2+). 3 residues coordinate ADP: asparagine 311, threonine 312, and asparagine 323.

Belongs to the isocitrate and isopropylmalate dehydrogenases family. Heterooligomer of subunits alpha (IDH3A), beta (IDH3B), and gamma (IDH3G) in the apparent ratio of 2:1:1. The heterodimer containing one IDH3A and one IDH3B subunit and the heterodimer containing one IDH3A and one IDH3G subunit assemble into a heterotetramer (which contains two subunits of IDH3A, one of IDH3B and one of IDH3G) and further into the heterooctamer. Mg(2+) is required as a cofactor. It depends on Mn(2+) as a cofactor.

It is found in the mitochondrion. The heterotetramer and the heterodimer composed of IDH3A and IDH3G subunits can be allosterically activated by citrate (CIT) or/and ADP, and the two activators can act independently or synergistically. The heterodimer composed of IDH3A and IDH3B subunits cannot be allosterically regulated and the allosteric regulation of the heterotetramer is through the IDH3G subunit and not the IDH3B subunit. The IDH3G subunit contains the allosteric site which consists of a CIT-binding site and an ADP-binding site, and the binding of CIT and ADP causes conformational changes at the allosteric site which are transmitted to the active site in the catalytic subunit (IDH3A) through a cascade of conformational changes at the heterodimer interface, leading to stabilization of the isocitrate-binding at the active site and thus activation of the enzyme. ATP can activate the heterotetramer and the heterodimer composed of IDH3A and IDH3G subunits at low concentrations but inhibits their activities at high concentrations, whereas ATP exhibits only inhibitory effect on the heterodimer composed of IDH3A and IDH3B subunits. Regulatory subunit which plays a role in the allosteric regulation of the enzyme catalyzing the decarboxylation of isocitrate (ICT) into alpha-ketoglutarate. The heterodimer composed of the alpha (IDH3A) and beta (IDH3B) subunits and the heterodimer composed of the alpha (IDH3A) and gamma (IDH3G) subunits, have considerable basal activity but the full activity of the heterotetramer (containing two subunits of IDH3A, one of IDH3B and one of IDH3G) requires the assembly and cooperative function of both heterodimers. This is Isocitrate dehydrogenase [NAD] subunit gamma, mitochondrial (IDH3G) from Bos taurus (Bovine).